Here is a 213-residue protein sequence, read N- to C-terminus: Carboxysome shell protein CcmP (213 aa).

BMC circularly permuted domains are found at residues 4–106 and 107–211; these read ELRS…RLKP and KIVS…GDRS. The short motif at 69 to 70 is the Probably important for pore gating element; it reads ER.

Belongs to the EutL/PduB family. In terms of assembly, a dimer of stacked trimers, the same faces interact.

It localises to the carboxysome. In terms of biological role, probably part of the carboxysome shell, a polyhedral inclusion where RuBisCO (ribulose bisphosphate carboxylase, rbcL-rbcS) is sequestered. It is thought that this protein controls transport of RuBisCO reactants in and out of the carboxysome; residual densities in the 4 X-ray structures suggest that differing compounds bind in interior pockets, depending on the open or closed state of the pore. This Synechococcus elongatus (strain ATCC 33912 / PCC 7942 / FACHB-805) (Anacystis nidulans R2) protein is Carboxysome shell protein CcmP.